Consider the following 143-residue polypeptide: Alpha-amylase/trypsin inhibitor CM16 (143 aa).

The first 24 residues, 1–24, serve as a signal peptide directing secretion; the sequence is MASKSNCVLLLAAVLVSIFAAVAA.

The protein belongs to the protease inhibitor I6 (cereal trypsin/alpha-amylase inhibitor) family. Subunit of the tetrameric inhibitor. Five disulfide bonds, which are essential for the inhibitor activity, are probably present. As to expression, developing endosperm.

The protein resides in the secreted. Alpha-amylase/trypsin inhibitor. It could be involved in insect defense mechanisms. The polypeptide is Alpha-amylase/trypsin inhibitor CM16 (Triticum aestivum (Wheat)).